Here is a 192-residue protein sequence, read N- to C-terminus: uncharacterized protein (192 aa).

The 132-residue stretch at 29-160 (QRQAAVLVPV…PLDIHRRGNH (132 aa)) folds into the Nudix hydrolase domain. Positions 67–89 (GAVDDTDASLIAAALREAQEEVA) match the Nudix box motif. Mg(2+) is bound by residues Glu83 and Glu87.

Belongs to the Nudix hydrolase family. PCD1 subfamily. Mn(2+) serves as cofactor. Requires Mg(2+) as cofactor.

Its function is as follows. Probably mediates the hydrolysis of some nucleoside diphosphate derivatives. This is an uncharacterized protein from Cronobacter sakazakii (strain ATCC BAA-894) (Enterobacter sakazakii).